The primary structure comprises 188 residues: V-type ATP synthase subunit E (188 aa).

The protein belongs to the V-ATPase E subunit family.

Its function is as follows. Produces ATP from ADP in the presence of a proton gradient across the membrane. This is V-type ATP synthase subunit E from Thermus thermophilus (strain ATCC BAA-163 / DSM 7039 / HB27).